Reading from the N-terminus, the 872-residue chain is UPF0182 protein Noc_0961 (872 aa).

Transmembrane regions (helical) follow at residues 8–28 (FLILGLSIVVLAVFLLIAGFE), 56–76 (LVVFIQVSIVFFLIFFVNFWV), 109–129 (SLWIYTPLSLVLSIIIAWPLF), 159–179 (LFSFPIYVLILQRLLISFLLL), 207–227 (WHLSILVLMVFFIEIWDFFLQ), 254–274 (PFIWLSMFFLLGIAFFLLLFI), and 282–302 (TLAVFSLLFILSLGARHFHFL).

It belongs to the UPF0182 family.

The protein localises to the cell membrane. The protein is UPF0182 protein Noc_0961 of Nitrosococcus oceani (strain ATCC 19707 / BCRC 17464 / JCM 30415 / NCIMB 11848 / C-107).